The primary structure comprises 348 residues: MKIIQEIPERNIIKLIPENLDDLWHLSHIIQPYNAIYAVTERRTEDKGDKLRADRGTKRRVFLGIKAEKINFHEDFNRLRVSGKIIHAPDDIPIGSYHTIDIEPFLQVSVQKNWKKWDIERLKEAEDSSKKPKVVVVIMDDSEADIFLVREFGIKELASIKSGVSKKLDYKQNEQAKFSYYSDIINSISEFEGKILFAGPGFGRNNIQNYISEKYKSLAPNVVVESANHTGKSGLSEILKSGIIDKIYGEARISKETQVVEKLLEEISKKGLAAYGIESVNNAMNFSAIDTLLLTDEYLRRNRRSVENLMNSVENINGNIIIVSTEHDAGKQLKALGGISALLRFPIE.

Belongs to the eukaryotic release factor 1 family. Pelota subfamily. As to quaternary structure, monomer. The cofactor is a divalent metal cation.

It is found in the cytoplasm. Its function is as follows. May function in recognizing stalled ribosomes, interact with stem-loop structures in stalled mRNA molecules, and effect endonucleolytic cleavage of the mRNA. May play a role in the release non-functional ribosomes and degradation of damaged mRNAs. Has endoribonuclease activity. The sequence is that of Protein pelota homolog from Methanococcus maripaludis (strain DSM 14266 / JCM 13030 / NBRC 101832 / S2 / LL).